The chain runs to 416 residues: Ribulose bisphosphate carboxylase large chain (416 aa).

The residue at position 5 (K5) is an N6,N6,N6-trimethyllysine. Substrate is bound by residues N114 and T164. Catalysis depends on K166, which acts as the Proton acceptor. K168 is a binding site for substrate. K192, D194, and E195 together coordinate Mg(2+). K192 bears the N6-carboxylysine mark. Residue H285 is the Proton acceptor of the active site. Substrate-binding residues include R286, H318, and S370.

The protein belongs to the RuBisCO large chain family. Type I subfamily. In terms of assembly, heterohexadecamer of 8 large chains and 8 small chains; disulfide-linked. The disulfide link is formed within the large subunit homodimers. Requires Mg(2+) as cofactor. In terms of processing, the disulfide bond which can form in the large chain dimeric partners within the hexadecamer appears to be associated with oxidative stress and protein turnover.

The protein localises to the plastid. Its subcellular location is the chloroplast. It catalyses the reaction 2 (2R)-3-phosphoglycerate + 2 H(+) = D-ribulose 1,5-bisphosphate + CO2 + H2O. The enzyme catalyses D-ribulose 1,5-bisphosphate + O2 = 2-phosphoglycolate + (2R)-3-phosphoglycerate + 2 H(+). Functionally, ruBisCO catalyzes two reactions: the carboxylation of D-ribulose 1,5-bisphosphate, the primary event in carbon dioxide fixation, as well as the oxidative fragmentation of the pentose substrate in the photorespiration process. Both reactions occur simultaneously and in competition at the same active site. In Spigelia marilandica (Woodland pinkroot), this protein is Ribulose bisphosphate carboxylase large chain (rbcL).